We begin with the raw amino-acid sequence, 190 residues long: PBP1-interacting protein LSM12 (190 aa).

In terms of domain architecture, Sm spans Pro-2 to Asn-69. Residues Pro-84–Lys-190 form the AD domain.

It belongs to the LSM12 family. In terms of assembly, forms a complex composed of at least MKT1, PBP1, XAC1 and LSM12. Forms a complex composed of at least MKT1L, PBP1, XAC1 and LSM12. Within the complex, interacts with PBP1; the interaction is direct.

Functionally, involved in post-transcriptional regulation of gene expression. This is PBP1-interacting protein LSM12 from Trypanosoma brucei brucei (strain 927/4 GUTat10.1).